The sequence spans 363 residues: Uroporphyrinogen decarboxylase (363 aa).

Substrate-binding positions include 27–31, D77, Y157, T212, and H333; that span reads RQAGR.

The protein belongs to the uroporphyrinogen decarboxylase family. In terms of assembly, homodimer.

It is found in the cytoplasm. It catalyses the reaction uroporphyrinogen III + 4 H(+) = coproporphyrinogen III + 4 CO2. The protein operates within porphyrin-containing compound metabolism; protoporphyrin-IX biosynthesis; coproporphyrinogen-III from 5-aminolevulinate: step 4/4. In terms of biological role, catalyzes the decarboxylation of four acetate groups of uroporphyrinogen-III to yield coproporphyrinogen-III. This is Uroporphyrinogen decarboxylase from Cupriavidus necator (strain ATCC 17699 / DSM 428 / KCTC 22496 / NCIMB 10442 / H16 / Stanier 337) (Ralstonia eutropha).